The chain runs to 83 residues: NADH dehydrogenase [ubiquinone] iron-sulfur protein 5-B (83 aa).

The CHCH domain maps to 11–52 (KGRCYDFWMDFSECMSHCREPKDCTLLREDYLECLHHSKEFQ). 2 consecutive short sequence motifs (cx9C motif) follow at residues 14–24 (CYDFWMDFSEC) and 34–44 (CTLLREDYLEC). Intrachain disulfides connect C14–C44 and C24–C34. The disordered stretch occupies residues 62–83 (QRKLRAASRKGEETGDGTHTHH).

This sequence belongs to the complex I NDUFS5 subunit family. In terms of assembly, complex I is composed of at least 49 different subunits. This is a component of the iron-sulfur (IP) fragment of the enzyme.

It localises to the mitochondrion. The protein localises to the mitochondrion inner membrane. Its subcellular location is the mitochondrion intermembrane space. Functionally, accessory subunit of the mitochondrial membrane respiratory chain NADH dehydrogenase (Complex I), that is believed not to be involved in catalysis. Complex I functions in the transfer of electrons from NADH to the respiratory chain. The immediate electron acceptor for the enzyme is believed to be ubiquinone. The chain is NADH dehydrogenase [ubiquinone] iron-sulfur protein 5-B from Arabidopsis thaliana (Mouse-ear cress).